The following is a 511-amino-acid chain: Pentatricopeptide repeat-containing protein At5g08510 (511 aa).

PPR repeat units lie at residues 46–80 (CTFL…GLRP), 81–115 (SHHT…GFES), 116–146 (DSFC…MSKR), 147–181 (DVPV…NVTS), 182–213 (WTTV…SVKP), 214–248 (NHIT…GFFD), 249–279 (NIYV…LGNQ), 281–315 (NLCS…GEKP), 316–346 (DAVT…MEEV), and 352–382 (KLEH…MPMK). Residues 387-462 (VWGTLLGACS…AAGYSYFVEV (76 aa)) are type E motif. The interval 463–494 (GVDVHKFTVEDKSHPRSYEIYQVLEEIFRRMK) is type E(+) motif.

This sequence belongs to the PPR family. PCMP-E subfamily.

This is Pentatricopeptide repeat-containing protein At5g08510 (PCMP-E20) from Arabidopsis thaliana (Mouse-ear cress).